Consider the following 242-residue polypeptide: Demethylmenaquinone methyltransferase (242 aa).

Residues Thr-62, Asp-83, and 112-113 (DV) each bind S-adenosyl-L-methionine.

This sequence belongs to the class I-like SAM-binding methyltransferase superfamily. MenG/UbiE family.

It carries out the reaction a 2-demethylmenaquinol + S-adenosyl-L-methionine = a menaquinol + S-adenosyl-L-homocysteine + H(+). Its pathway is quinol/quinone metabolism; menaquinone biosynthesis; menaquinol from 1,4-dihydroxy-2-naphthoate: step 2/2. Methyltransferase required for the conversion of demethylmenaquinol (DMKH2) to menaquinol (MKH2). The sequence is that of Demethylmenaquinone methyltransferase from Protochlamydia amoebophila (strain UWE25).